The sequence spans 662 residues: UvrABC system protein B (662 aa).

Residues 31–188 (DNIEGGEKAQ…NDLVDIQFER (158 aa)) enclose the Helicase ATP-binding domain. Residue 44–51 (GATGTGKT) coordinates ATP. Positions 97 to 120 (YYDYYQPEAYVPSSDTYIEKDSSV) match the Beta-hairpin motif. The Helicase C-terminal domain occupies 435 to 601 (QIDDLLGEIN…TIKKEIRDLI (167 aa)). The 36-residue stretch at 626–661 (KELVKKLEKQMQEAVEVLDFELAAQIRDMMLEVKAL) folds into the UVR domain.

Belongs to the UvrB family. In terms of assembly, forms a heterotetramer with UvrA during the search for lesions. Interacts with UvrC in an incision complex.

It localises to the cytoplasm. The UvrABC repair system catalyzes the recognition and processing of DNA lesions. A damage recognition complex composed of 2 UvrA and 2 UvrB subunits scans DNA for abnormalities. Upon binding of the UvrA(2)B(2) complex to a putative damaged site, the DNA wraps around one UvrB monomer. DNA wrap is dependent on ATP binding by UvrB and probably causes local melting of the DNA helix, facilitating insertion of UvrB beta-hairpin between the DNA strands. Then UvrB probes one DNA strand for the presence of a lesion. If a lesion is found the UvrA subunits dissociate and the UvrB-DNA preincision complex is formed. This complex is subsequently bound by UvrC and the second UvrB is released. If no lesion is found, the DNA wraps around the other UvrB subunit that will check the other stand for damage. The chain is UvrABC system protein B from Streptococcus pneumoniae (strain Taiwan19F-14).